The chain runs to 343 residues: L-lysine cyclodeaminase (343 aa).

It belongs to the ornithine cyclodeaminase/mu-crystallin family. The cofactor is NAD(+).

It catalyses the reaction L-lysine = L-pipecolate + NH4(+). The protein operates within antibiotic biosynthesis. With respect to regulation, inhibited by nipecotic acid and thiazolidine-2-carboxylic acid. In terms of biological role, converts L-lysine to L-pipecolate, which is incorporated into multiple secondary metabolite products, including rapamycin, tobulysin, virginiamycin and pristinamycin. The chain is L-lysine cyclodeaminase (rapL) from Streptomyces rapamycinicus (strain ATCC 29253 / DSM 41530 / NRRL 5491 / AYB-994) (Streptomyces hygroscopicus (strain ATCC 29253)).